The following is a 221-amino-acid chain: GTP cyclohydrolase 1 (221 aa).

3 residues coordinate Zn(2+): Cys109, His112, and Cys180.

This sequence belongs to the GTP cyclohydrolase I family. Toroid-shaped homodecamer, composed of two pentamers of five dimers.

It catalyses the reaction GTP + H2O = 7,8-dihydroneopterin 3'-triphosphate + formate + H(+). It participates in cofactor biosynthesis; 7,8-dihydroneopterin triphosphate biosynthesis; 7,8-dihydroneopterin triphosphate from GTP: step 1/1. The chain is GTP cyclohydrolase 1 from Serratia proteamaculans (strain 568).